We begin with the raw amino-acid sequence, 191 residues long: Protein Ves (191 aa).

This sequence belongs to the Ves family.

This Escherichia coli (strain ATCC 8739 / DSM 1576 / NBRC 3972 / NCIMB 8545 / WDCM 00012 / Crooks) protein is Protein Ves.